The sequence spans 215 residues: Late embryogenesis abundant protein 14 (215 aa).

2 disordered regions span residues 1-129 (MASQ…GQTG) and 190-215 (SGDNKNNAAAGKDTSTYKPGTGSDYQ). Basic and acidic residues-rich tracts occupy residues 13 to 24 (GETKARAEEKTG), 32 to 41 (EKAREAKDTA), 54 to 81 (GAKEATKEKAYETKDATKEKAYEAKDAA), and 88 to 111 (AMDKGRGAAGATRDKAYDAKDRAA). Residues 192-215 (DNKNNAAAGKDTSTYKPGTGSDYQ) show a composition bias toward polar residues.

This sequence belongs to the LEA type 4 family. In terms of tissue distribution, expressed in the shoot apex and leaves. Expressed in dry seeds. Expressed in roots and leaves.

It is found in the nucleus. In Oryza sativa subsp. japonica (Rice), this protein is Late embryogenesis abundant protein 14.